The primary structure comprises 29 residues: Cyclotide vibi-B (29 aa).

The segment at residues 1–29 is a cross-link (cyclopeptide (Gly-Asn)); sequence GLPVCGETCFGGTCNTPGCTCSYPICTRN. 3 cysteine pairs are disulfide-bonded: Cys-5–Cys-19, Cys-9–Cys-21, and Cys-14–Cys-26.

This is a cyclic peptide.

Its function is as follows. Probably participates in a plant defense mechanism. This chain is Cyclotide vibi-B, found in Viola biflora (Yellow wood violet).